A 185-amino-acid chain; its full sequence is MNVIRTEIEDVLILEPRVFGDDRGFFYESFNQSAFEHILGYPVSFVQDNHSRSSKNVLRGLHFQRGEYAQDKLVRCTHGAVFDVAVDIRPNSVSFGKWVGVLLSADNKQQLWIPKGFAHGFLVLSDIAEFQYKTTNYYHPESDCGICWNDERIAIDWPQTSGLILSPKDERLFTLDELIRLKLIA.

Substrate is bound by residues Arg23, Glu28, 47-49 (QDN), and Arg59. His62 functions as the Proton acceptor in the catalytic mechanism. Lys72 and His119 together coordinate substrate. Tyr132 functions as the Proton donor in the catalytic mechanism. Residues Asp143 and Lys168 each coordinate substrate.

Belongs to the dTDP-4-dehydrorhamnose 3,5-epimerase family. In terms of assembly, homodimer.

It carries out the reaction dTDP-4-dehydro-6-deoxy-alpha-D-glucose = dTDP-4-dehydro-beta-L-rhamnose. It participates in carbohydrate biosynthesis; dTDP-L-rhamnose biosynthesis. The protein operates within bacterial outer membrane biogenesis; LPS O-antigen biosynthesis. Functionally, catalyzes the epimerization of the C3' and C5'positions of dTDP-6-deoxy-D-xylo-4-hexulose, forming dTDP-6-deoxy-L-lyxo-4-hexulose. The polypeptide is dTDP-4-dehydrorhamnose 3,5-epimerase (rfbC) (Escherichia coli (strain K12)).